The sequence spans 378 residues: Succinyl-diaminopimelate desuccinylase (378 aa).

His66 lines the Zn(2+) pocket. Residue Asp68 is part of the active site. Asp100 is a Zn(2+) binding site. The Proton acceptor role is filled by Glu134. Residues Glu135, Glu163, and His350 each coordinate Zn(2+).

Belongs to the peptidase M20A family. DapE subfamily. Homodimer. Requires Zn(2+) as cofactor. The cofactor is Co(2+).

The enzyme catalyses N-succinyl-(2S,6S)-2,6-diaminopimelate + H2O = (2S,6S)-2,6-diaminopimelate + succinate. Its pathway is amino-acid biosynthesis; L-lysine biosynthesis via DAP pathway; LL-2,6-diaminopimelate from (S)-tetrahydrodipicolinate (succinylase route): step 3/3. Its function is as follows. Catalyzes the hydrolysis of N-succinyl-L,L-diaminopimelic acid (SDAP), forming succinate and LL-2,6-diaminopimelate (DAP), an intermediate involved in the bacterial biosynthesis of lysine and meso-diaminopimelic acid, an essential component of bacterial cell walls. The polypeptide is Succinyl-diaminopimelate desuccinylase (Hydrogenovibrio crunogenus (strain DSM 25203 / XCL-2) (Thiomicrospira crunogena)).